A 539-amino-acid polypeptide reads, in one-letter code: 2,3-bisphosphoglycerate-independent phosphoglycerate mutase (539 aa).

Mn(2+)-binding residues include Asp37 and Ser86. The active site involves Ser86. Substrate-binding positions include His147, 177-178, Arg210, Arg216, 284-287, and Lys359; these read RD and RADR. Mn(2+)-binding residues include Asp426, His430, Asp467, His468, and His485.

The protein belongs to the BPG-independent phosphoglycerate mutase family. Mg(2+) is required as a cofactor. Requires Mn(2+) as cofactor. In terms of tissue distribution, expressed ubiquitously. High expression levels in the nerve ring region, intestine and body wall muscles.

It carries out the reaction (2R)-2-phosphoglycerate = (2R)-3-phosphoglycerate. The protein operates within carbohydrate degradation; glycolysis; pyruvate from D-glyceraldehyde 3-phosphate: step 3/5. With respect to regulation, activity is not affected by 2,3-bisphosphoglycerate. Its function is as follows. Catalyzes the interconversion of 2-phosphoglycerate and 3-phosphoglycerate. This Caenorhabditis elegans protein is 2,3-bisphosphoglycerate-independent phosphoglycerate mutase.